Here is a 271-residue protein sequence, read N- to C-terminus: GTP cyclohydrolase FolE2 (271 aa).

The protein belongs to the GTP cyclohydrolase IV family.

It carries out the reaction GTP + H2O = 7,8-dihydroneopterin 3'-triphosphate + formate + H(+). The protein operates within cofactor biosynthesis; 7,8-dihydroneopterin triphosphate biosynthesis; 7,8-dihydroneopterin triphosphate from GTP: step 1/1. Converts GTP to 7,8-dihydroneopterin triphosphate. This is GTP cyclohydrolase FolE2 from Geotalea uraniireducens (strain Rf4) (Geobacter uraniireducens).